A 67-amino-acid polypeptide reads, in one-letter code: Small ribosomal subunit protein bS21 (67 aa).

Belongs to the bacterial ribosomal protein bS21 family.

The protein is Small ribosomal subunit protein bS21 of Acidiphilium cryptum (strain JF-5).